Here is a 305-residue protein sequence, read N- to C-terminus: Probable cell division protein WhiA (305 aa).

The segment at residues 269–302 (TIKELGELLEPSLGKSGVNHRLRKLVEQANELRK) is a DNA-binding region (H-T-H motif).

It belongs to the WhiA family.

Involved in cell division and chromosome segregation. The chain is Probable cell division protein WhiA from Lactococcus lactis subsp. lactis (strain IL1403) (Streptococcus lactis).